The sequence spans 558 residues: Tyrosine N-monooxygenase (558 aa).

A helical membrane pass occupies residues 13–33 (VLAAPLLSSSAILKLLLFVVT). Residues 48 to 67 (TTKCSSTTCASPPAGVGNPP) form a disordered region. Positions 49 to 65 (TKCSSTTCASPPAGVGN) are enriched in low complexity. Heme b is bound by residues arginine 138, arginine 167, histidine 422, arginine 491, and cysteine 493.

It belongs to the cytochrome P450 family. The cofactor is heme b.

The protein resides in the endoplasmic reticulum membrane. The catalysed reaction is L-tyrosine + 2 reduced [NADPH--hemoprotein reductase] + 2 O2 = (E)-4-hydroxyphenylacetaldehyde oxime + 2 oxidized [NADPH--hemoprotein reductase] + CO2 + 3 H2O + 2 H(+). It carries out the reaction L-tyrosine + reduced [NADPH--hemoprotein reductase] + O2 = N-hydroxy-L-tyrosine + oxidized [NADPH--hemoprotein reductase] + H2O + 2 H(+). It catalyses the reaction N-hydroxy-L-tyrosine + reduced [NADPH--hemoprotein reductase] + O2 = N,N-dihydroxy-L-tyrosine + oxidized [NADPH--hemoprotein reductase] + H2O + H(+). The enzyme catalyses N,N-dihydroxy-L-tyrosine + H(+) = (E)-4-hydroxyphenylacetaldehyde oxime + CO2 + H2O. It functions in the pathway secondary metabolite biosynthesis; dhurrin biosynthesis; dhurrin from L-tyrosine: step 1/3. Cytochrome P450 involved in the biosynthesis of the cyanogenic glucoside dhurrin. Catalyzes the conversion of L-tyrosine to p-hydroxyphenylacetaldehyde oxime, via the N-hydroxy-L-tyrosine and N,N-dihydroxy-L-tyrosine intermediates. Produces the (E) isomer of the final oxime product. This is Tyrosine N-monooxygenase (CYP79A1) from Sorghum bicolor (Sorghum).